The sequence spans 92 residues: Small ribosomal subunit protein uS19c (92 aa).

This sequence belongs to the universal ribosomal protein uS19 family.

Its subcellular location is the plastid. It is found in the chloroplast. In terms of biological role, protein S19 forms a complex with S13 that binds strongly to the 16S ribosomal RNA. This chain is Small ribosomal subunit protein uS19c, found in Lemna minor (Common duckweed).